A 614-amino-acid polypeptide reads, in one-letter code: Heat shock protein SSB1 (614 aa).

Residues 1-392 (MSTEVYDGAI…ILSGKATSAE (392 aa)) form a nucleotide binding domain (NBD) region. Residues 16-18 (TTY), Lys-74, 206-208 (GGT), 272-279 (ERAKRTLS), and Gly-343 each bind ATP. Positions 393-403 (TADLLLLDVVP) are inter-domain linker. Residues 404-614 (LSLGVAMEGN…RAVTKAMSSR (211 aa)) form a substrate binding domain (SBD) region. The tract at residues 517-613 (TSEIENMISE…KRAVTKAMSS (97 aa)) is lid domain (SBDalpha). Positions 575-583 (IENTMSEAM) match the Nuclear export signal motif.

Belongs to the heat shock protein 70 family. As to quaternary structure, interacts with HAT1 in starvation conditions.

The protein localises to the nucleus. Its subcellular location is the cytoplasm. The enzyme catalyses ATP + H2O = ADP + phosphate + H(+). Chaperone that interacts with the histone acetyltransferase HAT1 and mediates its translocation from the nucleus to the cytoplasm during germination and starvation conditions. Within the cytoplasm, HAT1 regulates autophagy via acetylation of the autophagy-related proteins ATG3 and ATG9. The sequence is that of Heat shock protein SSB1 from Pyricularia oryzae (strain 70-15 / ATCC MYA-4617 / FGSC 8958) (Rice blast fungus).